We begin with the raw amino-acid sequence, 92 residues long: Conotoxin Cal22f (92 aa).

A signal peptide spans 1–24 (MMSTKGITLFLCLLLLALATSVNG). Residues 25 to 44 (GQGTRRSRMTRALHGGRPSA) constitute a propeptide that is removed on maturation.

Post-translationally, contains 4 disulfide bonds. As to expression, expressed by the venom duct.

It localises to the secreted. In terms of biological role, probable neurotoxin with unknown target. Possibly targets ion channels. The sequence is that of Conotoxin Cal22f from Californiconus californicus (California cone).